The chain runs to 410 residues: Large ribosomal subunit protein uL4 (410 aa).

This sequence belongs to the universal ribosomal protein uL4 family.

It localises to the cytoplasm. This Tetrahymena thermophila (strain SB210) protein is Large ribosomal subunit protein uL4 (RPL4).